The following is a 297-amino-acid chain: ClpXP adapter protein SpxH (297 aa).

The protein belongs to the SpxH family. As to quaternary structure, interacts with Spx.

The protein localises to the cytoplasm. Adapter protein required for efficient degradation of Spx by ClpXP under non-stress conditions. Interaction with Spx stabilizes Spx and exposes the C-terminus of Spx for recognition and proteolysis by ClpXP. This chain is ClpXP adapter protein SpxH, found in Bacillus cereus (strain ZK / E33L).